The primary structure comprises 112 residues: Large ribosomal subunit protein eL30z (112 aa).

This sequence belongs to the eukaryotic ribosomal protein eL30 family.

This chain is Large ribosomal subunit protein eL30z (RPL30A), found in Arabidopsis thaliana (Mouse-ear cress).